The following is a 333-amino-acid chain: Glyceraldehyde-3-phosphate dehydrogenase (333 aa).

Residues 11–12 (RI), Asp-35, and Thr-121 each bind NAD(+). D-glyceraldehyde 3-phosphate is bound by residues 151–153 (SCT) and Thr-182. Cys-152 functions as the Nucleophile in the catalytic mechanism. Position 183 (Asn-183) interacts with NAD(+). D-glyceraldehyde 3-phosphate-binding positions include Arg-197, 210 to 211 (TG), and Arg-233. Position 315 (Asn-315) interacts with NAD(+).

The protein belongs to the glyceraldehyde-3-phosphate dehydrogenase family. As to quaternary structure, homotetramer.

The protein localises to the cytoplasm. The catalysed reaction is D-glyceraldehyde 3-phosphate + phosphate + NAD(+) = (2R)-3-phospho-glyceroyl phosphate + NADH + H(+). It functions in the pathway carbohydrate degradation; glycolysis; pyruvate from D-glyceraldehyde 3-phosphate: step 1/5. In terms of biological role, catalyzes the oxidative phosphorylation of glyceraldehyde 3-phosphate (G3P) to 1,3-bisphosphoglycerate (BPG) using the cofactor NAD. The first reaction step involves the formation of a hemiacetal intermediate between G3P and a cysteine residue, and this hemiacetal intermediate is then oxidized to a thioester, with concomitant reduction of NAD to NADH. The reduced NADH is then exchanged with the second NAD, and the thioester is attacked by a nucleophilic inorganic phosphate to produce BPG. The sequence is that of Glyceraldehyde-3-phosphate dehydrogenase (gap) from Thermotoga maritima (strain ATCC 43589 / DSM 3109 / JCM 10099 / NBRC 100826 / MSB8).